A 229-amino-acid chain; its full sequence is Large ribosomal subunit protein uL1 (229 aa).

The protein belongs to the universal ribosomal protein uL1 family. Part of the 50S ribosomal subunit.

Functionally, binds directly to 23S rRNA. The L1 stalk is quite mobile in the ribosome, and is involved in E site tRNA release. In terms of biological role, protein L1 is also a translational repressor protein, it controls the translation of the L11 operon by binding to its mRNA. This Phytoplasma australiense protein is Large ribosomal subunit protein uL1.